A 573-amino-acid polypeptide reads, in one-letter code: Peptidyl-prolyl cis-trans isomerase-like 2 (573 aa).

One can recognise a U-box domain in the interval 37–119; it reads QRLPFDCCAL…GNLHDPITYK (83 aa). The interval 223-247 is disordered; that stretch reads KNKSGQSPAPTPSKIDDGKGQEKKE. The segment covering 236-247 has biased composition (basic and acidic residues); the sequence is KIDDGKGQEKKE. A PPIase cyclophilin-type domain is found at 312–469; it reads SKAYATITTN…RDIVIQGVTV (158 aa). Positions 489 to 510 are enriched in basic and acidic residues; that stretch reads DQSDAALKRRAEAQKEREKDRT. The disordered stretch occupies residues 489–515; sequence DQSDAALKRRAEAQKEREKDRTTWLGT.

This sequence belongs to the cyclophilin-type PPIase family. PPIL2 subfamily.

It localises to the nucleus. The catalysed reaction is [protein]-peptidylproline (omega=180) = [protein]-peptidylproline (omega=0). It carries out the reaction S-ubiquitinyl-[E2 ubiquitin-conjugating enzyme]-L-cysteine + [acceptor protein]-L-lysine = [E2 ubiquitin-conjugating enzyme]-L-cysteine + N(6)-ubiquitinyl-[acceptor protein]-L-lysine.. The protein operates within protein modification; protein ubiquitination. May catalyze the cis-trans isomerization of proline imidic peptide bonds in oligopeptides thereby assisting the folding of proteins. May also function as a chaperone, playing a role in intracellular transport of proteins. May also have a protein ubiquitin ligase activity acting as an E3 ubiquitin protein ligase or as a ubiquitin-ubiquitin ligase promoting elongation of ubiquitin chains on proteins. This Cryptococcus neoformans var. neoformans serotype D (strain B-3501A) (Filobasidiella neoformans) protein is Peptidyl-prolyl cis-trans isomerase-like 2 (CYP8).